A 236-amino-acid polypeptide reads, in one-letter code: Rab-like protein 3 (236 aa).

Positions 1-236 (MASLDRVKVL…AGTLKSLHYD (236 aa)) are small GTPase-like. GTP contacts are provided by residues 16–21 (GVGKSS), 148–150 (KLD), and 179–180 (DC).

The protein belongs to the small GTPase superfamily. Rab family. As to quaternary structure, homodimer. Interacts with GPR89; the interaction stabilizes GPR89. Interacts with RAP1GDS1.

Functionally, required for KRAS signaling regulation and modulation of cell proliferation. Regulator of KRAS prenylation, and probably prenylation of other small GTPases. Required for lymphocyte development and function. Not required for myeloid cell development. This Homo sapiens (Human) protein is Rab-like protein 3 (RABL3).